A 257-amino-acid chain; its full sequence is MFITSPLEQFELNNYFGFYLFNYHFDFSNFGFYLGLSALIAISLAIINLTPYGSGAKIVPQKFGIAMEAIYFTMLNLVENQIHSSKTVSGQSYFPFIWSLFVLILFSNLLRLIPYGYATTAQLIFTLGLSISILIGATILGLQQHKAKVFGLFLPSGTPTPLIPLLVLIEFVSYIARGLSLGIRLGANIIAGHLTMSILGGLIFTFMGLNLITFIIGFLPITVLVAISLLEFGIAFIQAYVFAILTCGFINDSLNLH.

Residues 1–4 (MFIT) constitute a propeptide, removed in mature form. The next 8 helical transmembrane spans lie at 27–47 (FSNFGFYLGLSALIAISLAII), 58–78 (IVPQKFGIAMEAIYFTMLNLV), 93–113 (YFPFIWSLFVLILFSNLLRLI), 122–142 (QLIFTLGLSISILIGATILGL), 149–169 (VFGLFLPSGTPTPLIPLLVLI), 189–209 (IIAGHLTMSILGGLIFTFMGL), 214–234 (FIIGFLPITVLVAISLLEFGI), and 236–256 (FIQAYVFAILTCGFINDSLNL).

Belongs to the ATPase A chain family. In terms of assembly, F-type ATPases have 2 components, CF(1) - the catalytic core - and CF(0) - the membrane proton channel. CF(1) has five subunits: alpha(3), beta(3), gamma(1), delta(1), epsilon(1). CF(0) has three main subunits: a, b and c.

Its subcellular location is the mitochondrion inner membrane. Functionally, mitochondrial membrane ATP synthase (F(1)F(0) ATP synthase or Complex V) produces ATP from ADP in the presence of a proton gradient across the membrane which is generated by electron transport complexes of the respiratory chain. F-type ATPases consist of two structural domains, F(1) - containing the extramembraneous catalytic core and F(0) - containing the membrane proton channel, linked together by a central stalk and a peripheral stalk. During catalysis, ATP synthesis in the catalytic domain of F(1) is coupled via a rotary mechanism of the central stalk subunits to proton translocation. Key component of the proton channel; it may play a direct role in the translocation of protons across the membrane. The sequence is that of ATP synthase subunit a (atp6) from Schizosaccharomyces pombe (strain 972 / ATCC 24843) (Fission yeast).